A 49-amino-acid polypeptide reads, in one-letter code: Osteocalcin (49 aa).

Positions Tyr-1–Gly-47 constitute a Gla domain. Position 9 is a hydroxyproline (Pro-9). 4 residues coordinate Ca(2+): Glu-17, Glu-21, Glu-24, and Asp-30. 4-carboxyglutamate is present on residues Glu-17, Glu-21, and Glu-24. Cys-23 and Cys-29 are joined by a disulfide.

This sequence belongs to the osteocalcin/matrix Gla protein family. In terms of processing, gamma-carboxyglutamate residues are formed by vitamin K dependent carboxylation by GGCX. These residues are essential for the binding of calcium. Decarboxylation promotes the hormone activity.

The protein localises to the secreted. Functionally, the carboxylated form is one of the main organic components of the bone matrix, which constitutes 1-2% of the total bone protein. It acts as a negative regulator of bone formation and is required to limit bone formation without impairing bone resorption or mineralization. The carboxylated form binds strongly to apatite and calcium. Its function is as follows. The uncarboxylated form acts as a hormone secreted by osteoblasts, which regulates different cellular processes, such as energy metabolism, male fertility and brain development. Regulates of energy metabolism by acting as a hormone favoring pancreatic beta-cell proliferation, insulin secretion and sensitivity and energy expenditure. Uncarboxylated osteocalcin hormone also promotes testosterone production in the testes: acts as a ligand for G protein-coupled receptor GPRC6A at the surface of Leydig cells, initiating a signaling response that promotes the expression of enzymes required for testosterone synthesis in a CREB-dependent manner. Also acts as a regulator of brain development: osteocalcin hormone crosses the blood-brain barrier and acts as a ligand for GPR158 on neurons, initiating a signaling response that prevents neuronal apoptosis in the hippocampus, favors the synthesis of all monoamine neurotransmitters and inhibits that of gamma-aminobutyric acid (GABA). Osteocalcin also crosses the placenta during pregnancy and maternal osteocalcin is required for fetal brain development. This chain is Osteocalcin (BGLAP), found in Equus caballus (Horse).